Here is a 290-residue protein sequence, read N- to C-terminus: Energy-coupling factor transporter ATP-binding protein EcfA2 (290 aa).

The ABC transporter domain occupies 6 to 246 (EKVEHVYNAR…ADKLAAIGLS (241 aa)). Position 40–47 (40–47 (GHTGSGKS)) interacts with ATP.

It belongs to the ABC transporter superfamily. Energy-coupling factor EcfA family. As to quaternary structure, forms a stable energy-coupling factor (ECF) transporter complex composed of 2 membrane-embedded substrate-binding proteins (S component), 2 ATP-binding proteins (A component) and 2 transmembrane proteins (T component).

The protein resides in the cell membrane. Its function is as follows. ATP-binding (A) component of a common energy-coupling factor (ECF) ABC-transporter complex. Unlike classic ABC transporters this ECF transporter provides the energy necessary to transport a number of different substrates. The chain is Energy-coupling factor transporter ATP-binding protein EcfA2 from Geobacillus kaustophilus (strain HTA426).